The following is a 332-amino-acid chain: uncharacterized protein (332 aa).

Positions 1-23 (MKRIPSLIIGLLLILATWHSVLA) are cleaved as a signal peptide. Residues 231–251 (SFFLGMIVTLIILAPVILYLW) form a helical membrane-spanning segment.

It is found in the membrane. This is an uncharacterized protein from Pyrococcus horikoshii (strain ATCC 700860 / DSM 12428 / JCM 9974 / NBRC 100139 / OT-3).